Here is a 415-residue protein sequence, read N- to C-terminus: Putative F-box protein At5g40050 (415 aa).

Residues 13 to 59 form the F-box domain; sequence IDSISPLPDELLSHILSFLPTKRAASTSILSKRWRTLFPLMNHLCAS.

This is Putative F-box protein At5g40050 from Arabidopsis thaliana (Mouse-ear cress).